The chain runs to 308 residues: MKQVEIIDSHTGGEPTRLVLSGFPALAGATMADKRDALRERHDQWRRACLLEPRGSDVLVGALYCEPVSPDAACGVIFFNNTGYIGMCGHGTIGLIASLHCLGRIAPGAHKIDTPVGPVDAVLHEDGSVTLRNVPAYRYRRQAAVEVPGHGTVIGDIAWGGNWFFLVAEHGLSVRLDNVAALSAFSCATMQALEEQGITGADGARIDHVELFADDEQADSRNFVMCPGKAYDRSPCGTGTSAKLACLAADGKLAEGEQWVQAGITGSRFVGHYQREGDFIRPYITGRAHITARAMLLIDEQDPFAWGI.

Residue Cys-88 is the Proton acceptor of the active site. Substrate contacts are provided by residues 89-90 (GH), His-208, and Asp-232. Cys-236 functions as the Proton donor in the catalytic mechanism. 237–238 (GT) is a binding site for substrate.

The protein belongs to the proline racemase family.

The enzyme catalyses trans-4-hydroxy-L-proline = cis-4-hydroxy-D-proline. Catalyzes the epimerization of trans-4-hydroxy-L-proline (t4LHyp) to cis-4-hydroxy-D-proline (c4DHyp). Is likely involved in a degradation pathway that converts t4LHyp to alpha-ketoglutarate. Can also catalyze the epimerization of trans-3-hydroxy-L-proline (t3LHyp) to cis-3-hydroxy-D-proline (c3DHyp), albeit with 19-fold lower efficiency. Displays no proline racemase activity. This chain is 4-hydroxyproline 2-epimerase, found in Chromobacterium violaceum (strain ATCC 12472 / DSM 30191 / JCM 1249 / CCUG 213 / NBRC 12614 / NCIMB 9131 / NCTC 9757 / MK).